Reading from the N-terminus, the 230-residue chain is Leucyl/phenylalanyl-tRNA--protein transferase (230 aa).

This sequence belongs to the L/F-transferase family.

The protein localises to the cytoplasm. The enzyme catalyses N-terminal L-lysyl-[protein] + L-leucyl-tRNA(Leu) = N-terminal L-leucyl-L-lysyl-[protein] + tRNA(Leu) + H(+). It catalyses the reaction N-terminal L-arginyl-[protein] + L-leucyl-tRNA(Leu) = N-terminal L-leucyl-L-arginyl-[protein] + tRNA(Leu) + H(+). It carries out the reaction L-phenylalanyl-tRNA(Phe) + an N-terminal L-alpha-aminoacyl-[protein] = an N-terminal L-phenylalanyl-L-alpha-aminoacyl-[protein] + tRNA(Phe). Functionally, functions in the N-end rule pathway of protein degradation where it conjugates Leu, Phe and, less efficiently, Met from aminoacyl-tRNAs to the N-termini of proteins containing an N-terminal arginine or lysine. This Proteus mirabilis (strain HI4320) protein is Leucyl/phenylalanyl-tRNA--protein transferase.